The following is a 475-amino-acid chain: Equilibrative nucleoside transporter 3 (475 aa).

Positions 1 to 24 (MAVVSEDDFQHSSNSTYRTTSSSL) are disordered. Residues 1-53 (MAVVSEDDFQHSSNSTYRTTSSSLRADQEALLEKLLDRPPPGLQRPEDRFCGT) are Cytoplasmic-facing. A compositionally biased stretch (low complexity) spans 12–23 (SSNSTYRTTSSS). Ser21 and Ser23 each carry phosphoserine. Positions 31–32 (LL) match the Dileucine internalization motif motif. The chain crosses the membrane as a helical span at residues 54 to 74 (YIIFFSLGIGSLLPWNFFITA). Residues 75-105 (KEYWMFKLRNSSSPATGEDPEGSDILNYFES) lie on the Extracellular side of the membrane. Asn84 carries an N-linked (GlcNAc...) asparagine glycan. Residues 106–126 (YLAVASTVPSMLCLVANFLLV) traverse the membrane as a helical segment. Topologically, residues 127 to 134 (NRVAVHIR) are cytoplasmic. Residues 135 to 155 (VLASLTVILAIFMVITALVKV) form a helical membrane-spanning segment. Topologically, residues 156–162 (DTSSWTR) are extracellular. A helical membrane pass occupies residues 163-183 (GFFAVTIVCMVILSGASTVFS). At 184 to 199 (SSIYGMTGSFPMRNSQ) the chain is on the cytoplasmic side. The chain crosses the membrane as a helical span at residues 200 to 220 (ALISGGAMGGTVSAVASLVDL). The Extracellular portion of the chain corresponds to 221 to 230 (AASSDVRNSA). Residues 231–251 (LAFFLTATVFLVLCMGLYLLL) traverse the membrane as a helical segment. Topologically, residues 252-305 (SRLEYARYYMRPVLAAHVFSGEEELPQDSLSAPSVASRFIDSHTPPLRPILKKT) are cytoplasmic. A helical membrane pass occupies residues 306 to 326 (ASLGFCVTYVFFITSLIYPAI). At 327–337 (CTNIESLNKGS) the chain is on the extracellular side. The chain crosses the membrane as a helical span at residues 338-358 (GSLWTTKFFIPLTTFLLYNFA). Topologically, residues 359-377 (DLCGRQLTAWIQVPGPNSK) are cytoplasmic. The chain crosses the membrane as a helical span at residues 378-398 (ALPGFVLLRTCLIPLFVLCNY). Topologically, residues 399–415 (QPRVHLKTVVFQSDVYP) are extracellular. A helical membrane pass occupies residues 416-436 (ALLSSLLGLSNGYLSTLALLY). The Cytoplasmic portion of the chain corresponds to 437 to 454 (GPKIVPRELAEATGVVMS). A helical transmembrane segment spans residues 455–475 (FYVCLGLTLGSACSTLLVHLI).

It belongs to the SLC29A/ENT transporter (TC 2.A.57) family. Widely expressed in both adult and fetal tissues. Highest levels in placenta, uterus, ovary, spleen, lymph node and bone marrow. Expressed in liver. Lowest levels in brain and heart. Expressed in macrophages.

Its subcellular location is the lysosome membrane. The protein localises to the late endosome membrane. It is found in the mitochondrion membrane. It localises to the cell membrane. The catalysed reaction is adenosine(in) = adenosine(out). It catalyses the reaction guanosine(in) = guanosine(out). The enzyme catalyses inosine(in) = inosine(out). It carries out the reaction uridine(out) = uridine(in). The catalysed reaction is cytidine(in) = cytidine(out). It catalyses the reaction thymidine(in) = thymidine(out). The enzyme catalyses 2'-deoxyadenosine(in) = 2'-deoxyadenosine(out). It carries out the reaction 2'-deoxycytidine(in) = 2'-deoxycytidine(out). The catalysed reaction is guanine(out) = guanine(in). It catalyses the reaction uracil(in) = uracil(out). The enzyme catalyses (R)-noradrenaline(out) = (R)-noradrenaline(in). It carries out the reaction dopamine(out) = dopamine(in). The catalysed reaction is serotonin(out) = serotonin(in). It catalyses the reaction tyramine(in) = tyramine(out). The enzyme catalyses ATP(in) = ATP(out). In terms of biological role, uniporter that mediates the facilitative transport of nucleoside across lysosomal and mitochondrial membranes. Functions as a non-electrogenic Na(+)-independent transporter. Substrate transport is pH-dependent and enhanced under acidic condition, probably reflecting the location of the transporter in acidic intracellular compartments. Proton is not a cotransporting ion but most likely change the ionization state of the transporter which dictates transport-permissible/impermissible conformation for nucleoside translocation. May direct the nucleoside transport from lysosomes to cytosol or cytosol to mitochondria to facilitate the fundamental function of salvage synthesis of nucleic acids. Involved in the transport of nucleosides (adenosine, guanosine, uridine, thymidine, cytidine and inosine) and deoxynucleosides (deoxyadenosine, deoxycytidine). Also mediates transport of purine nucleobases (adenine, guanine) and pyrimidine nucleobases (uracil). Also able to transport monoamine neurotransmitters dopamine, serotonin, noradrenaline and tyramine. Capable of transporting ATP. Mediates nucleoside export from lysosomes in macrophages, which regulates macrophage functions and numbers. The protein is Equilibrative nucleoside transporter 3 of Homo sapiens (Human).